A 609-amino-acid chain; its full sequence is Replication protein E1 (609 aa).

Positions Lys81–Lys83 match the Nuclear localization signal motif. Phosphoserine; by host is present on residues Ser87 and Ser94. A Nuclear export signal motif is present at residues Leu93–Ile102. The segment at Gln149–Ala312 is DNA-binding region. The 151-residue stretch at Ile411 to Gln561 folds into the SF3 helicase domain. Gly437–Ser444 is a binding site for ATP. Lys518 participates in a covalent cross-link: Glycyl lysine isopeptide (Lys-Gly) (interchain with G-Cter in SUMO). Residues Asp584–Leu609 form a disordered region.

The protein belongs to the papillomaviridae E1 protein family. In terms of assembly, can form hexamers. Interacts with E2 protein; this interaction increases E1 DNA binding specificity. Interacts with host DNA polymerase subunit POLA2. Interacts with host single stranded DNA-binding protein RPA1. Interacts with host TOP1; this interaction stimulates the enzymatic activity of TOP1. In terms of processing, phosphorylated. Post-translationally, sumoylated.

It is found in the host nucleus. The catalysed reaction is Couples ATP hydrolysis with the unwinding of duplex DNA by translocating in the 3'-5' direction.. It carries out the reaction ATP + H2O = ADP + phosphate + H(+). ATP-dependent DNA 3'-5' helicase required for initiation of viral DNA replication. It forms a complex with the viral E2 protein. The E1-E2 complex binds to the replication origin which contains binding sites for both proteins. During the initial step, a dimer of E1 interacts with a dimer of protein E2 leading to a complex that binds the viral origin of replication with high specificity. Then, a second dimer of E1 displaces the E2 dimer in an ATP-dependent manner to form the E1 tetramer. Following this, two E1 monomers are added to each half of the site, which results in the formation of two E1 trimers on the viral ori. Subsequently, two hexamers will be created. The double hexamer acts as a bi-directional helicase machinery and unwinds the viral DNA and then recruits the host DNA polymerase to start replication. This chain is Replication protein E1, found in Human papillomavirus 37.